Consider the following 1434-residue polypeptide: Gag-Pol polyprotein (1434 aa).

Gly2 carries N-myristoyl glycine; by host lipidation. Residues 7–31 are interaction with Gp41; sequence VLSGGKLDAWEKIRLRPGGKKKYRL. Residues 8 to 43 are interaction with host CALM1; it reads LSGGKLDAWEKIRLRPGGKKKYRLKHIVWASRELKR. An interaction with host AP3D1 region spans residues 12–19; it reads KLDAWEKI. Residues 14 to 33 are interaction with membrane phosphatidylinositol 4,5-bisphosphate and RNA; that stretch reads DAWEKIRLRPGGKKKYRLKH. Positions 16–22 match the Nuclear export signal motif; sequence WEKIRLR. Residues 26 to 32 carry the Nuclear localization signal motif; that stretch reads KKKYRLK. Residues 73–77 are interaction with membrane phosphatidylinositol 4,5-bisphosphate; the sequence is EELKS. The span at 103–112 shows a compositional bias: basic and acidic residues; the sequence is KLQEEQDKHQ. A disordered region spans residues 103 to 124; that stretch reads KLQEEQDKHQQKTQQATADKGV. Phosphotyrosine; by host is present on Tyr132. The tract at residues 189–227 is interaction with human PPIA/CYPA and NUP153; the sequence is NTVGGHQAAMQMLKDTINEEAAEWDRLHPVHAGPIPPGQ. The dimerization/Multimerization of capsid protein p24 stretch occupies residues 277–363; that stretch reads YSPVSILDIK…GGPSHKARIL (87 aa). CCHC-type zinc fingers lie at residues 389-406 and 410-427; these read VKCF…NCRA and RGCW…DCTE. A disordered region spans residues 443-483; sequence EARKFSSEQTRANSPASRELRVRGGDSSLPEAGAERQGTGS. Over residues 449 to 458 the composition is skewed to polar residues; that stretch reads SEQTRANSPA. The interval 488–492 is dimerization of protease; the sequence is PQITL. In terms of domain architecture, Peptidase A2 spans 507–576; that stretch reads REALLDTGAD…TPVNIIGRNM (70 aa). The For protease activity; shared with dimeric partner role is filled by Asp512. Dimerization of protease regions lie at residues 536–542 and 575–587; these read GIGGFIK and NMLT…LNFP. The region spanning 630–820 is the Reverse transcriptase domain; it reads EGKISKIGPE…PPFLWMGYEL (191 aa). Mg(2+) contacts are provided by Asp696, Asp771, and Asp772. The tract at residues 813 to 821 is RT 'primer grip'; it reads FLWMGYELH. Positions 984–1000 match the Tryptophan repeat motif motif; the sequence is WEIWWTEYWQATWIPEW. The RNase H type-1 domain occupies 1020–1143; the sequence is IIGAETFYVD…VDKLVSTGIR (124 aa). Asp1029, Glu1064, Asp1084, and Asp1135 together coordinate Mg(2+). The Integrase-type zinc-finger motif lies at 1149-1190; the sequence is DGIDKAQEEHEKYHSNWRAMASDFNLPPVVAKEIVASCDKCQ. His1158, His1162, Cys1186, and Cys1189 together coordinate Zn(2+). In terms of domain architecture, Integrase catalytic spans 1200 to 1350; it reads VDCSPGIWQL…SAGERIIDII (151 aa). 3 residues coordinate Mg(2+): Asp1210, Asp1262, and Glu1298. The integrase-type DNA-binding region spans 1369 to 1416; it reads FRVYFRDSRDPVWKGPAKLLWKGEGAVVIQDNNEIKVIPRRKAKIIRD.

Homotrimer; further assembles as hexamers of trimers. Interacts with gp41 (via C-terminus). Interacts with host CALM1; this interaction induces a conformational change in the Matrix protein, triggering exposure of the myristate group. Interacts with host AP3D1; this interaction allows the polyprotein trafficking to multivesicular bodies during virus assembly. Part of the pre-integration complex (PIC) which is composed of viral genome, matrix protein, Vpr and integrase. In terms of assembly, homodimer; the homodimer further multimerizes as homohexamers or homopentamers. Interacts with human PPIA/CYPA; This interaction stabilizes the capsid. Interacts with human NUP153. Interacts with host PDZD8; this interaction stabilizes the capsid. Interacts with monkey TRIM5; this interaction destabilizes the capsid. As to quaternary structure, homodimer, whose active site consists of two apposed aspartic acid residues. Heterodimer of p66 RT and p51 RT (RT p66/p51). Heterodimerization of RT is essential for DNA polymerase activity. The overall folding of the subdomains is similar in p66 RT and p51 RT but the spatial arrangements of the subdomains are dramatically different. In terms of assembly, homotetramer; may further associate as a homohexadecamer. Part of the pre-integration complex (PIC) which is composed of viral genome, matrix protein, Vpr and integrase. Interacts with human SMARCB1/INI1 and human PSIP1/LEDGF isoform 1. Interacts with human KPNA3; this interaction might play a role in nuclear import of the pre-integration complex. Interacts with human NUP153; this interaction might play a role in nuclear import of the pre-integration complex. Mg(2+) serves as cofactor. In terms of processing, specific enzymatic cleavages by the viral protease yield mature proteins. The protease is released by autocatalytic cleavage. The polyprotein is cleaved during and after budding, this process is termed maturation. Proteolytic cleavage of p66 RT removes the RNase H domain to yield the p51 RT subunit. Nucleocapsid protein p7 might be further cleaved after virus entry. Post-translationally, tyrosine phosphorylated presumably in the virion by a host kinase. Phosphorylation is apparently not a major regulator of membrane association. Phosphorylated possibly by host MAPK1; this phosphorylation is necessary for Pin1-mediated virion uncoating. In terms of processing, methylated by host PRMT6, impairing its function by reducing RNA annealing and the initiation of reverse transcription.

Its subcellular location is the host cell membrane. The protein localises to the host endosome. It is found in the host multivesicular body. The protein resides in the virion membrane. It localises to the host nucleus. Its subcellular location is the host cytoplasm. The protein localises to the virion. The enzyme catalyses Specific for a P1 residue that is hydrophobic, and P1' variable, but often Pro.. It catalyses the reaction Endohydrolysis of RNA in RNA/DNA hybrids. Three different cleavage modes: 1. sequence-specific internal cleavage of RNA. Human immunodeficiency virus type 1 and Moloney murine leukemia virus enzymes prefer to cleave the RNA strand one nucleotide away from the RNA-DNA junction. 2. RNA 5'-end directed cleavage 13-19 nucleotides from the RNA end. 3. DNA 3'-end directed cleavage 15-20 nucleotides away from the primer terminus.. The catalysed reaction is 3'-end directed exonucleolytic cleavage of viral RNA-DNA hybrid.. It carries out the reaction DNA(n) + a 2'-deoxyribonucleoside 5'-triphosphate = DNA(n+1) + diphosphate. Its activity is regulated as follows. Protease: The viral protease is inhibited by many synthetic protease inhibitors (PIs), such as amprenavir, atazanavir, indinavir, loprinavir, nelfinavir, ritonavir and saquinavir. Use of protease inhibitors in tritherapy regimens permit more ambitious therapeutic strategies. Reverse transcriptase/ribonuclease H: RT can be inhibited either by nucleoside RT inhibitors (NRTIs) or by non nucleoside RT inhibitors (NNRTIs). NRTIs act as chain terminators, whereas NNRTIs inhibit DNA polymerization by binding a small hydrophobic pocket near the RT active site and inducing an allosteric change in this region. Classical NRTIs are abacavir, adefovir (PMEA), didanosine (ddI), lamivudine (3TC), stavudine (d4T), tenofovir (PMPA), zalcitabine (ddC), and zidovudine (AZT). Classical NNRTIs are atevirdine (BHAP U-87201E), delavirdine, efavirenz (DMP-266), emivirine (I-EBU), and nevirapine (BI-RG-587). The tritherapies used as a basic effective treatment of AIDS associate two NRTIs and one NNRTI. Its function is as follows. Mediates, with Gag polyprotein, the essential events in virion assembly, including binding the plasma membrane, making the protein-protein interactions necessary to create spherical particles, recruiting the viral Env proteins, and packaging the genomic RNA via direct interactions with the RNA packaging sequence (Psi). Gag-Pol polyprotein may regulate its own translation, by the binding genomic RNA in the 5'-UTR. At low concentration, the polyprotein would promote translation, whereas at high concentration, the polyprotein would encapsidate genomic RNA and then shut off translation. Targets the polyprotein to the plasma membrane via a multipartite membrane-binding signal, that includes its myristoylated N-terminus. Matrix protein is part of the pre-integration complex. Implicated in the release from host cell mediated by Vpu. Binds to RNA. In terms of biological role, forms the conical core that encapsulates the genomic RNA-nucleocapsid complex in the virion. Most core are conical, with only 7% tubular. The core is constituted by capsid protein hexamer subunits. The core is disassembled soon after virion entry. Host restriction factors such as TRIM5-alpha or TRIMCyp bind retroviral capsids and cause premature capsid disassembly, leading to blocks in reverse transcription. Capsid restriction by TRIM5 is one of the factors which restricts HIV-1 to the human species. Host PIN1 apparently facilitates the virion uncoating. On the other hand, interactions with PDZD8 or CYPA stabilize the capsid. Functionally, encapsulates and protects viral dimeric unspliced genomic RNA (gRNA). Binds these RNAs through its zinc fingers. Acts as a nucleic acid chaperone which is involved in rearangement of nucleic acid secondary structure during gRNA retrotranscription. Also facilitates template switch leading to recombination. As part of the polyprotein, participates in gRNA dimerization, packaging, tRNA incorporation and virion assembly. Its function is as follows. Aspartyl protease that mediates proteolytic cleavages of Gag and Gag-Pol polyproteins during or shortly after the release of the virion from the plasma membrane. Cleavages take place as an ordered, step-wise cascade to yield mature proteins. This process is called maturation. Displays maximal activity during the budding process just prior to particle release from the cell. Also cleaves Nef and Vif, probably concomitantly with viral structural proteins on maturation of virus particles. Hydrolyzes host EIF4GI and PABP1 in order to shut off the capped cellular mRNA translation. The resulting inhibition of cellular protein synthesis serves to ensure maximal viral gene expression and to evade host immune response. Also mediates cleavage of host YTHDF3. Mediates cleavage of host CARD8, thereby activating the CARD8 inflammasome, leading to the clearance of latent HIV-1 in patient CD4(+) T-cells after viral reactivation; in contrast, HIV-1 can evade CARD8-sensing when its protease remains inactive in infected cells prior to viral budding. Multifunctional enzyme that converts the viral RNA genome into dsDNA in the cytoplasm, shortly after virus entry into the cell. This enzyme displays a DNA polymerase activity that can copy either DNA or RNA templates, and a ribonuclease H (RNase H) activity that cleaves the RNA strand of RNA-DNA heteroduplexes in a partially processive 3' to 5' endonucleasic mode. Conversion of viral genomic RNA into dsDNA requires many steps. A tRNA(3)-Lys binds to the primer-binding site (PBS) situated at the 5'-end of the viral RNA. RT uses the 3' end of the tRNA primer to perform a short round of RNA-dependent minus-strand DNA synthesis. The reading proceeds through the U5 region and ends after the repeated (R) region which is present at both ends of viral RNA. The portion of the RNA-DNA heteroduplex is digested by the RNase H, resulting in a ssDNA product attached to the tRNA primer. This ssDNA/tRNA hybridizes with the identical R region situated at the 3' end of viral RNA. This template exchange, known as minus-strand DNA strong stop transfer, can be either intra- or intermolecular. RT uses the 3' end of this newly synthesized short ssDNA to perform the RNA-dependent minus-strand DNA synthesis of the whole template. RNase H digests the RNA template except for two polypurine tracts (PPTs) situated at the 5'-end and near the center of the genome. It is not clear if both polymerase and RNase H activities are simultaneous. RNase H probably can proceed both in a polymerase-dependent (RNA cut into small fragments by the same RT performing DNA synthesis) and a polymerase-independent mode (cleavage of remaining RNA fragments by free RTs). Secondly, RT performs DNA-directed plus-strand DNA synthesis using the PPTs that have not been removed by RNase H as primers. PPTs and tRNA primers are then removed by RNase H. The 3' and 5' ssDNA PBS regions hybridize to form a circular dsDNA intermediate. Strand displacement synthesis by RT to the PBS and PPT ends produces a blunt ended, linear dsDNA copy of the viral genome that includes long terminal repeats (LTRs) at both ends. In terms of biological role, catalyzes viral DNA integration into the host chromosome, by performing a series of DNA cutting and joining reactions. This enzyme activity takes place after virion entry into a cell and reverse transcription of the RNA genome in dsDNA. The first step in the integration process is 3' processing. This step requires a complex comprising the viral genome, matrix protein, Vpr and integrase. This complex is called the pre-integration complex (PIC). The integrase protein removes 2 nucleotides from each 3' end of the viral DNA, leaving recessed CA OH's at the 3' ends. In the second step, the PIC enters cell nucleus. This process is mediated through integrase and Vpr proteins, and allows the virus to infect a non dividing cell. This ability to enter the nucleus is specific of lentiviruses, other retroviruses cannot and rely on cell division to access cell chromosomes. In the third step, termed strand transfer, the integrase protein joins the previously processed 3' ends to the 5' ends of strands of target cellular DNA at the site of integration. The 5'-ends are produced by integrase-catalyzed staggered cuts, 5 bp apart. A Y-shaped, gapped, recombination intermediate results, with the 5'-ends of the viral DNA strands and the 3' ends of target DNA strands remaining unjoined, flanking a gap of 5 bp. The last step is viral DNA integration into host chromosome. This involves host DNA repair synthesis in which the 5 bp gaps between the unjoined strands are filled in and then ligated. Since this process occurs at both cuts flanking the HIV genome, a 5 bp duplication of host DNA is produced at the ends of HIV-1 integration. Alternatively, Integrase may catalyze the excision of viral DNA just after strand transfer, this is termed disintegration. The sequence is that of Gag-Pol polyprotein (gag-pol) from Homo sapiens (Human).